The sequence spans 545 residues: CTP synthase (545 aa).

Residues 1-266 are amidoligase domain; sequence MTTNYIFVTG…DDYICKRFSL (266 aa). Ser14 lines the CTP pocket. Ser14 is a UTP binding site. ATP is bound by residues 15–20 and Asp72; that span reads SLGKGI. Mg(2+) contacts are provided by Asp72 and Glu140. CTP contacts are provided by residues 147-149, 187-192, and Lys223; these read DIE and KTKPTQ. Residues 187–192 and Lys223 contribute to the UTP site; that span reads KTKPTQ. 239-241 contributes to the ATP binding site; sequence KDV. The Glutamine amidotransferase type-1 domain maps to 291-542; the sequence is TIGMVGKYIE…VKAASEFQKR (252 aa). L-glutamine is bound at residue Gly352. Residue Cys379 is the Nucleophile; for glutamine hydrolysis of the active site. Residues 380-383, Glu403, and Arg470 each bind L-glutamine; that span reads LGMQ. Residues His515 and Glu517 contribute to the active site.

Belongs to the CTP synthase family. Homotetramer.

It catalyses the reaction UTP + L-glutamine + ATP + H2O = CTP + L-glutamate + ADP + phosphate + 2 H(+). The catalysed reaction is L-glutamine + H2O = L-glutamate + NH4(+). It carries out the reaction UTP + NH4(+) + ATP = CTP + ADP + phosphate + 2 H(+). The protein operates within pyrimidine metabolism; CTP biosynthesis via de novo pathway; CTP from UDP: step 2/2. Allosterically activated by GTP, when glutamine is the substrate; GTP has no effect on the reaction when ammonia is the substrate. The allosteric effector GTP functions by stabilizing the protein conformation that binds the tetrahedral intermediate(s) formed during glutamine hydrolysis. Inhibited by the product CTP, via allosteric rather than competitive inhibition. Catalyzes the ATP-dependent amination of UTP to CTP with either L-glutamine or ammonia as the source of nitrogen. Regulates intracellular CTP levels through interactions with the four ribonucleotide triphosphates. In Escherichia coli O127:H6 (strain E2348/69 / EPEC), this protein is CTP synthase.